Here is a 195-residue protein sequence, read N- to C-terminus: Imidazoleglycerol-phosphate dehydratase (195 aa).

Belongs to the imidazoleglycerol-phosphate dehydratase family.

It localises to the cytoplasm. It catalyses the reaction D-erythro-1-(imidazol-4-yl)glycerol 3-phosphate = 3-(imidazol-4-yl)-2-oxopropyl phosphate + H2O. It functions in the pathway amino-acid biosynthesis; L-histidine biosynthesis; L-histidine from 5-phospho-alpha-D-ribose 1-diphosphate: step 6/9. The polypeptide is Imidazoleglycerol-phosphate dehydratase (Cereibacter sphaeroides (strain ATCC 17025 / ATH 2.4.3) (Rhodobacter sphaeroides)).